A 309-amino-acid chain; its full sequence is Foldase protein PrsA 2 (309 aa).

The signal sequence occupies residues 1–22 (MKQMNKLITGVVTLATVVTLSA). A lipid anchor (N-palmitoyl cysteine) is attached at Cys-23. Cys-23 is lipidated: S-diacylglycerol cysteine. One can recognise a PpiC domain in the interval 146–241 (TPTMTAEIMQ…RTYHIIKVTK (96 aa)).

This sequence belongs to the PrsA family.

The protein localises to the cell membrane. The catalysed reaction is [protein]-peptidylproline (omega=180) = [protein]-peptidylproline (omega=0). Functionally, plays a major role in protein secretion by helping the post-translocational extracellular folding of several secreted proteins. The polypeptide is Foldase protein PrsA 2 (prsA2) (Streptococcus pyogenes serotype M3 (strain ATCC BAA-595 / MGAS315)).